Here is a 952-residue protein sequence, read N- to C-terminus: Lysosomal alpha-glucosidase (952 aa).

Residues 1 to 27 (MRVRHPPCSRRLLAICALVSLATAALL) form the signal peptide. A propeptide spanning residues 28–69 (GHILLHDFLLVPRELSGSSPVLEETHPAHQQGASRPGPRDAQ) is cleaved from the precursor. Positions 47 to 80 (PVLEETHPAHQQGASRPGPRDAQAHLGRPRAVPT) are disordered. One can recognise a P-type domain in the interval 80–131 (TQCDVPPNSRFDCAPDKAITREQCDARGCCYIPAKQGLRGAQMGQPWCFFPP). 3 cysteine pairs are disulfide-bonded: Cys82–Cys109, Cys92–Cys108, and Cys103–Cys127. Asn140, Asn233, and Asn390 each carry an N-linked (GlcNAc...) asparagine glycan. Asp404 is a substrate binding site. The N-linked (GlcNAc...) asparagine glycan is linked to Asn470. Catalysis depends on Asp518, which acts as the Nucleophile. Glu521 is a catalytic residue. A disulfide bond links Cys533 and Cys558. Residues Arg600 and Asp616 each coordinate substrate. Residues Cys647 and Cys658 are joined by a disulfide bond. The N-linked (GlcNAc...) asparagine glycan is linked to Asn652. His674 is a binding site for substrate. Residues Asn882 and Asn925 are each glycosylated (N-linked (GlcNAc...) asparagine).

This sequence belongs to the glycosyl hydrolase 31 family.

The protein localises to the lysosome. The protein resides in the lysosome membrane. The enzyme catalyses Hydrolysis of terminal, non-reducing (1-&gt;4)-linked alpha-D-glucose residues with release of alpha-D-glucose.. Functionally, essential for the degradation of glycogen in lysosomes. Has highest activity on alpha-1,4-linked glycosidic linkages, but can also hydrolyze alpha-1,6-linked glucans. This is Lysosomal alpha-glucosidase (GAA) from Pongo abelii (Sumatran orangutan).